The sequence spans 577 residues: Acyl-coenzyme A synthetase ACSM2B, mitochondrial (577 aa).

A mitochondrion-targeting transit peptide spans methionine 1–phenylalanine 46. Position 139 (glutamine 139) interacts with CoA. ATP-binding positions include threonine 221–lysine 229, glutamate 359–threonine 364, aspartate 446, and arginine 461. Threonine 364 serves as a coordination point for substrate. Serine 469–tyrosine 471 serves as a coordination point for CoA. Residue arginine 472 coordinates substrate. Arginine 501 contributes to the CoA binding site. At serine 513 the chain carries Phosphoserine. Residues lysine 532 and tyrosine 540–arginine 542 contribute to the CoA site. Residue lysine 557 coordinates ATP.

It belongs to the ATP-dependent AMP-binding enzyme family. As to quaternary structure, monomer. It depends on Mg(2+) as a cofactor. Requires Mn(2+) as cofactor. In terms of tissue distribution, detected in liver.

It is found in the mitochondrion. It catalyses the reaction a medium-chain fatty acid + ATP + CoA = a medium-chain fatty acyl-CoA + AMP + diphosphate. The catalysed reaction is benzoate + ATP + CoA = benzoyl-CoA + AMP + diphosphate. The enzyme catalyses hexanoate + ATP + CoA = hexanoyl-CoA + AMP + diphosphate. It carries out the reaction butanoate + ATP + CoA = butanoyl-CoA + AMP + diphosphate. It catalyses the reaction octanoate + ATP + CoA = octanoyl-CoA + AMP + diphosphate. The catalysed reaction is decanoate + ATP + CoA = decanoyl-CoA + AMP + diphosphate. Activated by monovalent cations, such as potassium, rubidium or ammonium. Catalyzes the activation of fatty acids by CoA to produce an acyl-CoA, the first step in fatty acid metabolism. Capable of activating medium-chain fatty acids (e.g. butyric (C4) to decanoic (C10) acids), and certain carboxylate-containing xenobiotics, e.g. benzoate. This Homo sapiens (Human) protein is Acyl-coenzyme A synthetase ACSM2B, mitochondrial (ACSM2B).